The sequence spans 87 residues: Exendin-4 (87 aa).

The signal sequence occupies residues Met1–Gln23. Positions Met24–Ile45 are excised as a propeptide. Residue Ser86 is modified to Serine amide.

It belongs to the glucagon family. As to expression, expressed by the venom gland.

It is found in the secreted. In terms of biological role, venom protein that mimics the incretin hormone glucagon-like peptide 1 (GLP-1). It stimulates insulin synthesis and secretion, protects against beta-cell apoptosis in response to different insults, and promotes beta-cell proliferation It also promotes satiety, reduces food intake, reduces fat deposition, reduces body weight and inhibits gastric emptying. Interacts with GLP-1 receptor (GLP1R). Induces hypotension that is mediated by relaxation of cardiac smooth muscle. In Heloderma suspectum cinctum (Banded Gila monster), this protein is Exendin-4.